Consider the following 423-residue polypeptide: Serine incorporator 5 (423 aa).

Over 1 to 36 the chain is Extracellular; the sequence is MSAQCCAGQLACCCGSAGCSLCCDCCPRIRQSLSTR. A helical membrane pass occupies residues 37 to 57; the sequence is FMYALYFILVVVLCCIMMSTT. The Cytoplasmic portion of the chain corresponds to 58-89; it reads VAHKMKEHIPFFEDMCKGIKAGDTCEKLVGYS. A helical membrane pass occupies residues 90–110; that stretch reads AVYRVCFGMACFFFIFCLLTL. Residues 111 to 124 are Extracellular-facing; sequence KINNSKSCRAHIHN. N113 carries N-linked (GlcNAc...) asparagine glycosylation. Residues 125–145 traverse the membrane as a helical segment; that stretch reads GFWFFKLLLLGAMCSGAFFIP. The Cytoplasmic portion of the chain corresponds to 146–156; sequence DQDTFLNAWRY. The helical transmembrane segment at 157-177 threads the bilayer; it reads VGAVGGFLFIGIQLLLLVEFA. Over 178-198 the chain is Extracellular; that stretch reads HKWNKNWTAGTASNKLWYASL. An N-linked (GlcNAc...) asparagine glycan is attached at N183. A helical transmembrane segment spans residues 199 to 219; the sequence is ALVTLIMYSIATGGLVLMAVF. Over 220–230 the chain is Cytoplasmic; it reads YTQKDSCMENK. The helical transmembrane segment at 231-251 threads the bilayer; the sequence is ILLGVNGGLCLLISLVAISPW. Residues 252–258 are Extracellular-facing; the sequence is VQNRQPH. Residues 259–279 traverse the membrane as a helical segment; it reads SGLLQSGVISCYVTYLTFSAL. Residues 280 to 311 lie on the Cytoplasmic side of the membrane; the sequence is SSKPAEVVLDEHGKNVTICVPDFGQDLYRDEN. The helical transmembrane segment at 312 to 332 threads the bilayer; sequence LVTILGTSLLIGCILYSCLTS. Topologically, residues 333–385 are extracellular; that stretch reads TTRSSSDALQGRYAAPELEIARCCFCFSPGGEDTEEQQPGKEGPRVIYDEKKG. A helical transmembrane segment spans residues 386-406; the sequence is TVYIYSYFHFVFFLASLYVMM. Residues 407 to 423 lie on the Cytoplasmic side of the membrane; sequence TVTNWFNHVRSAFHLLP.

This sequence belongs to the TDE1 family. In terms of tissue distribution, highly expressed in placenta, skeletal muscle, spleen, thymus, testis and peripheral leukocyte and is expressed weakly in the heart, liver and fetal brain.

The protein localises to the cell membrane. It localises to the cytoplasm. Its subcellular location is the perinuclear region. The enzyme catalyses a 1,2-diacyl-sn-glycero-3-phospho-L-serine(in) = a 1,2-diacyl-sn-glycero-3-phospho-L-serine(out). The catalysed reaction is a 1,2-diacyl-sn-glycero-3-phosphocholine(in) = a 1,2-diacyl-sn-glycero-3-phosphocholine(out). It carries out the reaction a 1,2-diacyl-sn-glycero-3-phosphoethanolamine(in) = a 1,2-diacyl-sn-glycero-3-phosphoethanolamine(out). Functionally, restriction factor required to restrict infectivity of lentiviruses, such as HIV-1: acts by inhibiting an early step of viral infection. Impairs the penetration of the viral particle into the cytoplasm. Non-ATP-dependent, non-specific lipid transporter for phosphatidylserine, phosphatidylcholine, and phosphatidylethanolamine. Functions as a scramblase that flips lipids in both directions across the membrane. Phospholipid scrambling results in HIV-1 surface exposure of phosphatidylserine and loss of membrane asymmetry, which leads to changes in HIV-1 Env conformation and loss of infectivity. Enhances the incorporation of serine into phosphatidylserine and sphingolipids. May play a role in providing serine molecules for the formation of myelin glycosphingolipids in oligodendrocytes. The chain is Serine incorporator 5 from Homo sapiens (Human).